The primary structure comprises 371 residues: uncharacterized protein (371 aa).

The 4Fe-4S ferredoxin-type domain maps to 110–140 (MEKFIDFDRCNKCGECARKICKAKWTPLNYL).

This is an uncharacterized protein from Methanocaldococcus jannaschii (strain ATCC 43067 / DSM 2661 / JAL-1 / JCM 10045 / NBRC 100440) (Methanococcus jannaschii).